The primary structure comprises 624 residues: MAFPNIEQYPQISVDCESTGLEWYKEDRAFGVSIYLPTGDAEYYDIRKDRNAFHWMKDNLWKAKKIVNHNIKFDIHMLRATGINLNPANCECTMIRAALIDEHLLKYDLDSLLKKYLKMSKDNDIYADLAQIFGGQPTRKVQILNLHRAPVDLVARYANIDTEGAYKLWEWQEGEIERQDLHQVWQLERRLFRHIVEMERRGIRIDPNEANRRAEELDRVTAETVAELNRLAGFEVNPNPSGSIKKLFNPKQNEAGIWVARDGTPLPKTDSGAPSLGAKSLESMTDPCAKLILKARKLNKTKDTFIRGHVLGHAIQNGQDWFVHPNINQTKSDTGDGSEGTGTGRLSYTRPALQQIPSRDKEIASIVRPIFLPDRGQKWSYGDLDQHEFRIFAHYANPKDIIEAYAQNPDLDMHQIVADLTGMPRSATKAGEANAKQINLGMVFNMGAGELASQMGLPFTIESVDFGDHVHDLKKAGPETLEIVENYYAKVQGVKEMARKARTIAKSRGYVRTLMGRHIRFPRGMFTYKASGLIFQGTAGDLNKLNICNIAEYLESECPYNRLLLNIHDEYSVSLEDDGKEIKHLKELQGLVQHRPELRVPIRIDFSHPAPNWWLATRADLATK.

It belongs to the DNA polymerase type-A family. DpoZ subfamily.

The enzyme catalyses DNA(n) + a 2'-deoxyribonucleoside 5'-triphosphate = DNA(n+1) + diphosphate. The catalysed reaction is dZTP + DNA(n) = DNA(n)-Z + diphosphate. In terms of biological role, DNA polymerase that preferentially incorporates the non-canonical base aminoadenine/dZTP instead of adenine into the synthesized DNA. 29 times as efficient in using dZTP instead of dATP as a substrate. In addition to this preference for dZTP, the phage also encodes a dATP triphosphohydrolase that removes dATP and its precursor dADP from the nucleotide pool of the host. The polypeptide is DNA polymerase DpoZ (dpoZ) (Acinetobacter baumannii).